Consider the following 318-residue polypeptide: DNA polymerase IV (318 aa).

The UmuC domain occupies 6–186 (IIHIDMDAFY…LPLGKIPGVG (181 aa)). Residues D10 and D104 each contribute to the Mg(2+) site. E105 is a catalytic residue.

Belongs to the DNA polymerase type-Y family. Monomer. Mg(2+) serves as cofactor.

It is found in the cytoplasm. It carries out the reaction DNA(n) + a 2'-deoxyribonucleoside 5'-triphosphate = DNA(n+1) + diphosphate. Poorly processive, error-prone DNA polymerase involved in untargeted mutagenesis. Copies undamaged DNA at stalled replication forks, which arise in vivo from mismatched or misaligned primer ends. These misaligned primers can be extended by PolIV. Exhibits no 3'-5' exonuclease (proofreading) activity. May be involved in translesional synthesis, in conjunction with the beta clamp from PolIII. The protein is DNA polymerase IV of Neisseria meningitidis serogroup B (strain ATCC BAA-335 / MC58).